Reading from the N-terminus, the 205-residue chain is Cerebellin-3 (205 aa).

Residues 1–32 form the signal peptide; it reads MLGAKPHWLPGPLHSPGLPLVLVLLALGAGWA. The region spanning 67–205 is the C1q domain; that stretch reads APPGRVAFAA…SFSGFLIFPL (139 aa). The segment at 72–205 is necessary for interaction with CBLN3, and homotrimerization; that stretch reads VAFAAVRSHH…SFSGFLIFPL (134 aa). Residue N90 is glycosylated (N-linked (GlcNAc...) asparagine).

As to quaternary structure, heterohexamer; disulfide-linked heterotrimers. Interacts with CBLN1. May also form oligomers with CBLN2 and CBLN4.

Its subcellular location is the endoplasmic reticulum. It localises to the golgi apparatus. The protein localises to the cis-Golgi network. The protein resides in the secreted. It is found in the synapse. Functionally, may be involved in synaptic functions in the CNS. The protein is Cerebellin-3 (CBLN3) of Homo sapiens (Human).